The following is a 114-amino-acid chain: Notch-regulated ankyrin repeat-containing protein (114 aa).

ANK repeat units lie at residues 50 to 79 (EGQTALHQSVIDGNLELVKLLVKFGADIRL) and 83 to 112 (DGWSALHIAAYGGHQDIVLYLITKAKYSSS).

Belongs to the NRARP family. In terms of assembly, forms a ternary complex with the intracellular domain (ICD) of notch1 and rbpj/suh.

Promotes loss of intracellular domain (ICD) of Notch1 in embryos. By down-regulating ICD levels, could function as a negative feedback regulator of Notch signaling that attenuates ICD-mediated transcription. Involved in angiogenesis. May be involved in somitogenesis. The polypeptide is Notch-regulated ankyrin repeat-containing protein (nrarp) (Xenopus laevis (African clawed frog)).